We begin with the raw amino-acid sequence, 53 residues long: uncharacterized protein (53 aa).

The protein belongs to the ycf15 family.

It localises to the plastid. The protein resides in the chloroplast. This is an uncharacterized protein from Helianthus annuus (Common sunflower).